Here is a 324-residue protein sequence, read N- to C-terminus: uncharacterized protein (324 aa).

This is an uncharacterized protein from Homo sapiens (Human).